A 101-amino-acid chain; its full sequence is Small ribosomal subunit protein uS10 (101 aa).

This sequence belongs to the universal ribosomal protein uS10 family. As to quaternary structure, part of the 30S ribosomal subunit.

Its function is as follows. Involved in the binding of tRNA to the ribosomes. This Saccharopolyspora erythraea (strain ATCC 11635 / DSM 40517 / JCM 4748 / NBRC 13426 / NCIMB 8594 / NRRL 2338) protein is Small ribosomal subunit protein uS10.